The primary structure comprises 379 residues: Chaperone protein DnaJ (379 aa).

The 65-residue stretch at 5 to 69 folds into the J domain; it reads DYYEVLGISK…NKRASYDQFG (65 aa). The CR-type zinc finger occupies 136 to 218; it reads GTTKEISIRK…CHGKGTENKT (83 aa). Zn(2+) contacts are provided by cysteine 149, cysteine 152, cysteine 166, cysteine 169, cysteine 192, cysteine 195, cysteine 206, and cysteine 209. CXXCXGXG motif repeat units follow at residues 149 to 156, 166 to 173, 192 to 199, and 206 to 213; these read CETCHGDG, CSYCNGAG, CPKCNGSG, and CPTCHGKG.

The protein belongs to the DnaJ family. Homodimer. It depends on Zn(2+) as a cofactor.

The protein resides in the cytoplasm. In terms of biological role, participates actively in the response to hyperosmotic and heat shock by preventing the aggregation of stress-denatured proteins and by disaggregating proteins, also in an autonomous, DnaK-independent fashion. Unfolded proteins bind initially to DnaJ; upon interaction with the DnaJ-bound protein, DnaK hydrolyzes its bound ATP, resulting in the formation of a stable complex. GrpE releases ADP from DnaK; ATP binding to DnaK triggers the release of the substrate protein, thus completing the reaction cycle. Several rounds of ATP-dependent interactions between DnaJ, DnaK and GrpE are required for fully efficient folding. Also involved, together with DnaK and GrpE, in the DNA replication of plasmids through activation of initiation proteins. This Staphylococcus aureus (strain bovine RF122 / ET3-1) protein is Chaperone protein DnaJ.